The chain runs to 204 residues: ATP synthase subunit 4, mitochondrial (204 aa).

A run of 2 helical transmembrane segments spans residues 27-47 (GILATTAAASVYAISSELYVV) and 52-72 (ILLVTFLGFIALISKTVAPLY).

F-type ATP synthases have 2 components, the catalytic core F(1) and the membrane-embedded component F(0), linked together by a central stalk and a peripheral stalk. The central stalk, also called rotor shaft, is often seen as part of F(1). The peripheral stalk is seen as part of F(0). F(0) contains the membrane channel next to the rotor. F-type ATP synthases form dimers but each monomer functions independently in ATP generation. The dimer consists of 18 different polypeptides: ATP1 (subunit alpha, part of F(1), 3 molecules per monomer), ATP2 (subunit beta, part of F(1), 3 molecules per monomer), ATP3 (subunit gamma, part of the central stalk), ATP4 (subunit b, part of the peripheral stalk), ATP5/OSCP (subunit 5/OSCP, part of the peripheral stalk), ATP6 (subunit a, part of the peripheral stalk), ATP7 (subunit d, part of the peripheral stalk), ATP8 (subunit 8, part of the peripheral stalk), OLI1 (subunit c, part of the rotor, 10 molecules per monomer), ATP14 (subunit h, part of the peripheral stalk), ATP15 (subunit epsilon, part of the central stalk), ATP16 (subunit delta, part of the central stalk), ATP17 (subunit f, part of the peripheral stalk), ATP18 (subunit i/j, part of the peripheral stalk). Dimer-specific subunits are ATP19 (subunit k, at interface between monomers), ATP20 (subunit g, at interface between monomers), TIM11 (subunit e, at interface between monomers). Also contains subunit L.

It is found in the mitochondrion inner membrane. Functionally, mitochondrial membrane ATP synthase (F(1)F(0) ATP synthase or Complex V) produces ATP from ADP in the presence of a proton gradient across the membrane which is generated by electron transport complexes of the respiratory chain. F-type ATP synthases consist of two structural domains, F(1) - containing the extramembraneous catalytic core, and F(0) - containing the membrane proton channel, linked together by a central stalk and a peripheral stalk. During catalysis, ATP synthesis in the catalytic domain of F(1) is coupled via a rotary mechanism of the central stalk subunits to proton translocation. Part of the complex F(0) domain and the peripheral stalk, which acts as a stator to hold the catalytic alpha/ATP1(3)beta/ATP2(3) subcomplex and subunit a/ATP6 static relative to the rotary elements. The protein is ATP synthase subunit 4, mitochondrial of Pichia angusta (Yeast).